We begin with the raw amino-acid sequence, 157 residues long: Small ribosomal subunit protein uS7 (157 aa).

The protein belongs to the universal ribosomal protein uS7 family. Part of the 30S ribosomal subunit. Contacts proteins S9 and S11.

In terms of biological role, one of the primary rRNA binding proteins, it binds directly to 16S rRNA where it nucleates assembly of the head domain of the 30S subunit. Is located at the subunit interface close to the decoding center, probably blocks exit of the E-site tRNA. This chain is Small ribosomal subunit protein uS7, found in Chlamydia caviae (strain ATCC VR-813 / DSM 19441 / 03DC25 / GPIC) (Chlamydophila caviae).